The sequence spans 112 residues: Mitochondrial import inner membrane translocase subunit TIM14-3 (112 aa).

Ala-2 is subject to N-acetylalanine. Residues 6–28 (IAGAAVAAAAVAGRYGILAWQAF) form a helical membrane-spanning segment. In terms of domain architecture, J spans 53–112 (EAALILGVRESVVADKVKEAHRRVMVANHPDAGGSHYLASKINEAKDMMLGKSNNSGSAF).

It belongs to the TIM14 family. As to quaternary structure, probable component of the PAM complex at least composed of a mitochondrial HSP70 protein, TIMM44 and TIMM14. The complex interacts with the TIMM23 component of the TIM17:23 complex.

Its subcellular location is the mitochondrion. It localises to the mitochondrion inner membrane. Component of the PAM complex, a complex required for the translocation of transit peptide-containing proteins from the inner membrane into the mitochondrial matrix in an ATP-dependent manner. In Arabidopsis thaliana (Mouse-ear cress), this protein is Mitochondrial import inner membrane translocase subunit TIM14-3 (TIM14-3).